The sequence spans 801 residues: Transferrin receptor protein 2 (801 aa).

Residues 1 to 83 (MERLWGLFQR…WAAAGRRAAP (83 aa)) are Cytoplasmic-facing. Residues 16–45 (PRSSQTVYQRVEGPRKGHLEEEEEDGEEGA) are disordered. An Endocytosis signal motif is present at residues 23–26 (YQRV). Acidic residues predominate over residues 35–45 (EEEEEDGEEGA). The helical; Signal-anchor for type II membrane protein transmembrane segment at 84–104 (YLVLTALLIFTGAFLLGYVAF) threads the bilayer. Residues 105–801 (RGSCQACGDS…GDVWNIDNNF (697 aa)) lie on the Extracellular side of the membrane. N-linked (GlcNAc...) asparagine glycosylation is found at N240, N339, N540, and N754.

Belongs to the peptidase M28 family. M28B subfamily. In terms of assembly, homodimer. In terms of tissue distribution, predominantly expressed in liver. While the alpha form is also expressed in spleen, lung, muscle, prostate and peripheral blood mononuclear cells, the beta form is expressed in all tissues tested, albeit weakly.

The protein localises to the cell membrane. Its subcellular location is the cytoplasm. Its function is as follows. Mediates cellular uptake of transferrin-bound iron in a non-iron dependent manner. May be involved in iron metabolism, hepatocyte function and erythrocyte differentiation. The chain is Transferrin receptor protein 2 (TFR2) from Homo sapiens (Human).